The sequence spans 228 residues: Large ribosomal subunit protein uL3 (228 aa).

Residues 135-159 (MKSQRASHGNSRSHNVPGSIGMAQD) form a disordered region. Polar residues predominate over residues 140 to 150 (ASHGNSRSHNV). An N5-methylglutamine modification is found at Gln158.

The protein belongs to the universal ribosomal protein uL3 family. Part of the 50S ribosomal subunit. Forms a cluster with proteins L14 and L19. In terms of processing, methylated by PrmB.

Its function is as follows. One of the primary rRNA binding proteins, it binds directly near the 3'-end of the 23S rRNA, where it nucleates assembly of the 50S subunit. This Albidiferax ferrireducens (strain ATCC BAA-621 / DSM 15236 / T118) (Rhodoferax ferrireducens) protein is Large ribosomal subunit protein uL3.